The sequence spans 465 residues: Ribulose bisphosphate carboxylase large chain (465 aa).

N6,N6,N6-trimethyllysine is present on Lys4. Residues Asn113 and Thr163 each contribute to the substrate site. Lys165 (proton acceptor) is an active-site residue. Lys167 provides a ligand contact to substrate. Mg(2+) is bound by residues Lys191, Asp193, and Glu194. An N6-carboxylysine modification is found at Lys191. The active-site Proton acceptor is His284. 3 residues coordinate substrate: Arg285, His317, and Ser369.

The protein belongs to the RuBisCO large chain family. Type I subfamily. In terms of assembly, heterohexadecamer of 8 large chains and 8 small chains; disulfide-linked. The disulfide link is formed within the large subunit homodimers. The cofactor is Mg(2+). The disulfide bond which can form in the large chain dimeric partners within the hexadecamer appears to be associated with oxidative stress and protein turnover.

It is found in the plastid. It localises to the chloroplast. The enzyme catalyses 2 (2R)-3-phosphoglycerate + 2 H(+) = D-ribulose 1,5-bisphosphate + CO2 + H2O. It catalyses the reaction D-ribulose 1,5-bisphosphate + O2 = 2-phosphoglycolate + (2R)-3-phosphoglycerate + 2 H(+). Its function is as follows. RuBisCO catalyzes two reactions: the carboxylation of D-ribulose 1,5-bisphosphate, the primary event in carbon dioxide fixation, as well as the oxidative fragmentation of the pentose substrate in the photorespiration process. Both reactions occur simultaneously and in competition at the same active site. This chain is Ribulose bisphosphate carboxylase large chain, found in Ephedra tweediana (Vining horsetail).